The primary structure comprises 332 residues: Transcription factor ZEB2 (332 aa).

The segment at 1 to 37 (MQSTESFHALPTRSDVEDPNERRKIQNRIAQKKHRQK) is disordered. The span at 14–24 (SDVEDPNERRK) shows a compositional bias: basic and acidic residues. A bZIP domain is found at 17–50 (EDPNERRKIQNRIAQKKHRQKMKRRIEELETKVN). Residues 21–43 (ERRKIQNRIAQKKHRQKMKRRIE) are basic motif. The tract at residues 45–52 (LETKVNNQ) is leucine-zipper. Residues 106–170 (MHDSPRPNQQ…EGSLPTRQHD (65 aa)) form a disordered region. Polar residues predominate over residues 111 to 134 (RPNQQQRLSVSGMPSSPTSTSNVA). The segment covering 143–155 (HSSASNHLSSLSL) has biased composition (low complexity). Positions 160 to 170 (TEGSLPTRQHD) are enriched in polar residues.

Belongs to the bZIP family.

Its subcellular location is the nucleus. Its function is as follows. Transcription factor that specifically controls transcription of the zearalenone biosynthesis cluster genes. The sequence is that of Transcription factor ZEB2 from Gibberella zeae (strain ATCC MYA-4620 / CBS 123657 / FGSC 9075 / NRRL 31084 / PH-1) (Wheat head blight fungus).